A 215-amino-acid polypeptide reads, in one-letter code: Cytochrome c biogenesis ATP-binding export protein CcmA (215 aa).

An ABC transporter domain is found at 3–211 (LTAEILAARR…KMTGFAGVDN (209 aa)). 35-42 (GKNGSGKS) contacts ATP.

This sequence belongs to the ABC transporter superfamily. CcmA exporter (TC 3.A.1.107) family. The complex is composed of two ATP-binding proteins (CcmA) and two transmembrane proteins (CcmB).

Its subcellular location is the cell inner membrane. The catalysed reaction is heme b(in) + ATP + H2O = heme b(out) + ADP + phosphate + H(+). Its function is as follows. Part of the ABC transporter complex CcmAB involved in the biogenesis of c-type cytochromes; once thought to export heme, this seems not to be the case, but its exact role is uncertain. Responsible for energy coupling to the transport system. This is Cytochrome c biogenesis ATP-binding export protein CcmA from Rhizobium johnstonii (strain DSM 114642 / LMG 32736 / 3841) (Rhizobium leguminosarum bv. viciae).